The sequence spans 393 residues: Protein DDI1 homolog 2 (393 aa).

A Ubiquitin-like domain is found at 1–81; sequence MLITVYCVRR…VILRQKEAPE (81 aa). Residues 82 to 127 are disordered; the sequence is TRPAAPFPGLDFSTIAVPGASSQPDPSQPQAPPPPPDTSSFPQGLD. The span at 107–118 shows a compositional bias: pro residues; sequence PSQPQAPPPPPD. The active site involves D246. The short motif at 370-389 is the Ubiquitin-binding element; it reads EEIADRELAEVLQKSADEAD.

It belongs to the DDI1 family. As to quaternary structure, homodimer.

Its subcellular location is the cytoplasm. It is found in the cytosol. The protein resides in the chromosome. Its function is as follows. Aspartic protease that mediates the cleavage of NFE2L1/NRF1 at 'Leu-104', thereby promoting release of NFE2L1/NRF1 from the endoplasmic reticulum membrane. Ubiquitination of NFE2L1/NRF1 is a prerequisite for cleavage, suggesting that DDI2 specifically recognizes and binds ubiquitinated NFE2L1/NRF1. Seems to act as a proteasomal shuttle which links the proteasome and replication fork proteins like RTF2. Required for cellular survival following replication stress. This chain is Protein DDI1 homolog 2 (ddi2), found in Xenopus laevis (African clawed frog).